The chain runs to 104 residues: Large ribosomal subunit protein eL30 (104 aa).

The protein belongs to the eukaryotic ribosomal protein eL30 family.

This is Large ribosomal subunit protein eL30 (RPL30) from Tetrahymena thermophila (strain SB210).